Here is a 134-residue protein sequence, read N- to C-terminus: D-ribose pyranase (134 aa).

His20 (proton donor) is an active-site residue. Residues Asp28, His99, and 123-125 each bind substrate; that span reads FSN.

The protein belongs to the RbsD / FucU family. RbsD subfamily. In terms of assembly, homodecamer.

It localises to the cytoplasm. It carries out the reaction beta-D-ribopyranose = beta-D-ribofuranose. It participates in carbohydrate metabolism; D-ribose degradation; D-ribose 5-phosphate from beta-D-ribopyranose: step 1/2. Catalyzes the interconversion of beta-pyran and beta-furan forms of D-ribose. In Staphylococcus carnosus (strain TM300), this protein is D-ribose pyranase.